The sequence spans 226 residues: Protein pdh1 (226 aa).

Residues 1-26 form the signal peptide; that stretch reads MNHFSKFSVTKRLLILEVLFSAISFG. Residues 27–41 are Extracellular-facing; the sequence is ISIYIKVFGRSSIVT. The helical transmembrane segment at 42 to 62 threads the bilayer; it reads FFLLCFHLVPNALFLFPWTII. Residues 63-65 are Cytoplasmic-facing; the sequence is TTS. Residues 66 to 86 traverse the membrane as a helical segment; it reads FVDANVFTLLSSILILSVYGV. Over 87-97 the chain is Extracellular; that stretch reads EIERSWGHKEY. Residues 98–118 form a helical membrane-spanning segment; that stretch reads LLFCQFLTVIPNIAVLIPCFI. Residues 119–191 are Cytoplasmic-facing; sequence AYKITDSHYL…VFQSFPWTYF (73 aa). A helical membrane pass occupies residues 192 to 212; the sequence is CLAVSGTCISELYVLFVHPVV. Topologically, residues 213 to 226 are extracellular; the sequence is QELFHLESHTQLPI.

The protein resides in the membrane. In Schizosaccharomyces pombe (strain 972 / ATCC 24843) (Fission yeast), this protein is Protein pdh1 (pdh1).